The sequence spans 525 residues: GMP synthase [glutamine-hydrolyzing] (525 aa).

The Glutamine amidotransferase type-1 domain maps to 9–207; the sequence is RILILDFGSQ…VLDICQCEAL (199 aa). Residue Cys-86 is the Nucleophile of the active site. Residues His-181 and Glu-183 contribute to the active site. Residues 208–400 form the GMPS ATP-PPase domain; that stretch reads WTPATIIEDA…LGLPYDMLFR (193 aa). 235-241 serves as a coordination point for ATP; it reads SGGVDSS.

As to quaternary structure, homodimer.

It carries out the reaction XMP + L-glutamine + ATP + H2O = GMP + L-glutamate + AMP + diphosphate + 2 H(+). Its pathway is purine metabolism; GMP biosynthesis; GMP from XMP (L-Gln route): step 1/1. Catalyzes the synthesis of GMP from XMP. In Serratia proteamaculans (strain 568), this protein is GMP synthase [glutamine-hydrolyzing].